Here is a 37-residue protein sequence, read N- to C-terminus: Large ribosomal subunit protein bL36 (37 aa).

It belongs to the bacterial ribosomal protein bL36 family.

The polypeptide is Large ribosomal subunit protein bL36 (Moorella thermoacetica (strain ATCC 39073 / JCM 9320)).